The following is a 468-amino-acid chain: Argininosuccinate lyase (468 aa).

This sequence belongs to the lyase 1 family. Argininosuccinate lyase subfamily.

It is found in the cytoplasm. The enzyme catalyses 2-(N(omega)-L-arginino)succinate = fumarate + L-arginine. Its pathway is amino-acid biosynthesis; L-arginine biosynthesis; L-arginine from L-ornithine and carbamoyl phosphate: step 3/3. This Paraburkholderia phymatum (strain DSM 17167 / CIP 108236 / LMG 21445 / STM815) (Burkholderia phymatum) protein is Argininosuccinate lyase.